A 349-amino-acid chain; its full sequence is GTP 3',8-cyclase (349 aa).

Residues 24–249 (PFGRAVTYLR…KDMSYRTGGP (226 aa)) enclose the Radical SAM core domain. GTP is bound at residue arginine 33. Cysteine 40 and cysteine 44 together coordinate [4Fe-4S] cluster. An S-adenosyl-L-methionine-binding site is contributed by tyrosine 46. Position 47 (cysteine 47) interacts with [4Fe-4S] cluster. Arginine 82 is a binding site for GTP. Glycine 86 is a binding site for S-adenosyl-L-methionine. Threonine 116 serves as a coordination point for GTP. An S-adenosyl-L-methionine-binding site is contributed by serine 140. GTP is bound at residue lysine 176. Methionine 210 contacts S-adenosyl-L-methionine. The [4Fe-4S] cluster site is built by cysteine 273 and cysteine 276. GTP is bound at residue 278–280 (RVR). Residue cysteine 290 coordinates [4Fe-4S] cluster.

It belongs to the radical SAM superfamily. MoaA family. Monomer and homodimer. Requires [4Fe-4S] cluster as cofactor.

It carries out the reaction GTP + AH2 + S-adenosyl-L-methionine = (8S)-3',8-cyclo-7,8-dihydroguanosine 5'-triphosphate + 5'-deoxyadenosine + L-methionine + A + H(+). It participates in cofactor biosynthesis; molybdopterin biosynthesis. Its function is as follows. Catalyzes the cyclization of GTP to (8S)-3',8-cyclo-7,8-dihydroguanosine 5'-triphosphate. The chain is GTP 3',8-cyclase from Sinorhizobium medicae (strain WSM419) (Ensifer medicae).